Consider the following 669-residue polypeptide: UvrABC system protein B (669 aa).

One can recognise a Helicase ATP-binding domain in the interval Glu-26–Arg-183. An ATP-binding site is contributed by Gly-39–Thr-46. Residues Tyr-92–Val-115 carry the Beta-hairpin motif. The 163-residue stretch at Gln-431–Ile-593 folds into the Helicase C-terminal domain. The region spanning Glu-629 to Gln-664 is the UVR domain.

It belongs to the UvrB family. Forms a heterotetramer with UvrA during the search for lesions. Interacts with UvrC in an incision complex.

Its subcellular location is the cytoplasm. The UvrABC repair system catalyzes the recognition and processing of DNA lesions. A damage recognition complex composed of 2 UvrA and 2 UvrB subunits scans DNA for abnormalities. Upon binding of the UvrA(2)B(2) complex to a putative damaged site, the DNA wraps around one UvrB monomer. DNA wrap is dependent on ATP binding by UvrB and probably causes local melting of the DNA helix, facilitating insertion of UvrB beta-hairpin between the DNA strands. Then UvrB probes one DNA strand for the presence of a lesion. If a lesion is found the UvrA subunits dissociate and the UvrB-DNA preincision complex is formed. This complex is subsequently bound by UvrC and the second UvrB is released. If no lesion is found, the DNA wraps around the other UvrB subunit that will check the other stand for damage. The polypeptide is UvrABC system protein B (Proteus mirabilis (strain HI4320)).